Here is a 359-residue protein sequence, read N- to C-terminus: Trans-enoyl reductase FSL5 (359 aa).

47–50 (IDGK) contacts NADP(+). Residue 134 to 141 (SGVGTIGL) coordinates substrate. NADP(+) is bound by residues 169–172 (STAT), 192–195 (SPHN), Y210, and 257–258 (LE). Position 277–281 (277–281 (GPTLL)) interacts with substrate. 346–347 (VS) serves as a coordination point for NADP(+).

It belongs to the zinc-containing alcohol dehydrogenase family. As to quaternary structure, monomer.

Its pathway is secondary metabolite biosynthesis. In terms of biological role, trans-enoyl reductase; part of the gene cluster that mediates the biosynthesis of fusarielins F, G and H, decaketide compounds with 5 methylations and a decaline core that act as mycoestrogens as they stimulate growth of MCF-7 breast cancer cells. The initial compound in the pathway is produced by the reducing polyketide synthase FSL1. FSL1 lacks an active enoyl reductase (ER) domain and biosynthesis of fusarielins relies on the trans-acting enoyl reductase FSL5, before it is released through hydrolysis catalyzed by the thioesterase FSL2. Fusarielins F, G, and H have a C11=C12 cis double bond and is fully reduced between C10 and C11 and between C12 and C13. FSL3 can be involved in the formation of the C11=C12 cis double bond by moving a hypothetical C10=C11 or C12=C13 trans double bond to form prefusarielin. Prefusarielin is oxygenated at C15 and C16 by the cytochrome P450 monooxygenase FSL4, resulting in fusarielin F, which subsequently is epoxidized into fusarielin G by the same enzyme. The final step in the pathway is a reduction of the carboxylic acid moiety to yield fusarielin H via a still undetermined mechanism. The sequence is that of Trans-enoyl reductase FSL5 from Gibberella zeae (strain ATCC MYA-4620 / CBS 123657 / FGSC 9075 / NRRL 31084 / PH-1) (Wheat head blight fungus).